The sequence spans 89 residues: Sec-independent protein translocase protein TatA (89 aa).

Residues 1–21 traverse the membrane as a helical segment; that stretch reads MGGISIWQLLIIAVIVVLLFG. Residues 65 to 89 are disordered; the sequence is ADKQADTNQEQAKTEDAKRHDKEQV. Residues 76–89 are compositionally biased toward basic and acidic residues; that stretch reads AKTEDAKRHDKEQV.

The protein belongs to the TatA/E family. The Tat system comprises two distinct complexes: a TatABC complex, containing multiple copies of TatA, TatB and TatC subunits, and a separate TatA complex, containing only TatA subunits. Substrates initially bind to the TatABC complex, which probably triggers association of the separate TatA complex to form the active translocon.

The protein resides in the cell inner membrane. In terms of biological role, part of the twin-arginine translocation (Tat) system that transports large folded proteins containing a characteristic twin-arginine motif in their signal peptide across membranes. TatA could form the protein-conducting channel of the Tat system. This Shigella flexneri protein is Sec-independent protein translocase protein TatA.